A 365-amino-acid polypeptide reads, in one-letter code: Peptidyl-prolyl cis-trans isomerase FKBP42 (365 aa).

Residues 1 to 15 (MDESLEHQTQTHDQE) are compositionally biased toward basic and acidic residues. Residues 1 to 44 (MDESLEHQTQTHDQESEIVTEGSAVVHSEPSQEGNVPPKVDSEA) are disordered. The tract at residues 1–163 (MDESLEHQTQ…EVIGFDETKE (163 aa)) is interaction with MDR1/PGP1. The 93-residue stretch at 67–159 (YSTCFLHYRA…LYEVEVIGFD (93 aa)) folds into the PPIase FKBP-type domain. The interaction with MRP1 stretch occupies residues 163 to 337 (EGKARSDMTV…GKDEGGAKSK (175 aa)). 3 TPR repeats span residues 179-212 (ADRRKMDGNSLFKEEKLEEAMQQYEMAIAYMGDD), 230-263 (NPCHLNIAACLIKLKRYDEAIGHCNIVLTEEEKN), and 264-297 (PKALFRRGKAKAELGQMDSARDDFRKAQKYAPDD). A calmodulin-binding region spans residues 310–326 (QEKALYQKQKEMYKGIF). Residues 338–357 (SLFWLIVLWQWFVSLFSRIF) form a helical; Anchor for type IV membrane protein membrane-spanning segment.

Belongs to the FKBP-type PPIase family. Interacts with calmodulin (CaM), MRP1, MRP2, MDR1/PGP1, MDR11/PGP19 and SHD/HSP90. Interacts with 1-naphthylphthalamic acid (NPA).

It is found in the cell membrane. The protein localises to the vacuole membrane. The protein resides in the endoplasmic reticulum. The enzyme catalyses [protein]-peptidylproline (omega=180) = [protein]-peptidylproline (omega=0). Functionally, PPIases accelerate the folding of proteins. It catalyzes the cis-trans isomerization of proline imidic peptide bonds in oligopeptides. Modulates the uptake of MRP substrates into the vacuole; reduces metolachlor-GS (MOC-GS) and enhances 17-beta-estradiol 17-(beta-D-glucuronide) (E(2)17betaG) uptake. Regulates cell elongation and orientation. Functions as a positive regulator of PGP1-mediated auxin transport. Confers drug modulation of PGP1 efflux activity as interaction with NPA or flavonol quercetin prevents its physical and functional interaction with PGP1. Required for the proper localization of auxin-related ABCB transporters. Plays a role in brassinosteroid (BR) signaling pathway. Required for seed development by promoting stamen elongation and, to a lesser extent, anther dehiscence and pollen maturation, probably as a chaperone helping ABCB1 and ABCB19 auxin transporters localization and activation. Involved in auxin signaling in nectaries to promote starch accumulation to attract visiting pollinators. The chain is Peptidyl-prolyl cis-trans isomerase FKBP42 from Arabidopsis thaliana (Mouse-ear cress).